Here is a 130-residue protein sequence, read N- to C-terminus: Large ribosomal subunit protein bL12c (130 aa).

It belongs to the bacterial ribosomal protein bL12 family. As to quaternary structure, homodimer. Part of the ribosomal stalk of the 50S ribosomal subunit. Forms a multimeric L10(L12)X complex, where L10 forms an elongated spine to which 2 to 4 L12 dimers bind in a sequential fashion. Binds GTP-bound translation factors.

The protein resides in the plastid. Forms part of the ribosomal stalk which helps the ribosome interact with GTP-bound translation factors. Is thus essential for accurate translation. This is Large ribosomal subunit protein bL12c from Prototheca wickerhamii.